A 307-amino-acid chain; its full sequence is MSDERIRQIAFYGKGGIGKSTTSQNTLAAMAEMGKRILIVGCDPKADSTRLILHCKAQTTVLHLAAEKGAVEDLELEEVVINGFRNIRCVESGGPEPGVGCAGRGIITAINFLEENGAYQDLDFVSYDVLGDVVCGGFAMPIREGKAQEIYIVTSGEMMAMFAANNISRGILKYAHSGGVRLGGLICNSRKTDREWDLISELARRISTQMIHFVPRDNIVQHAELRRMTVNEYAPDSNQANEYRTLATKIIDNEFMAVPTPLEMDELEELLIEFGILESDEQVKQLTETDKAAKESEKKQEDAEGEA.

13 to 20 (GKGGIGKS) lines the ATP pocket. C101 is a [4Fe-4S] cluster binding site. R104 carries the post-translational modification ADP-ribosylarginine; by dinitrogenase reductase ADP-ribosyltransferase. [4Fe-4S] cluster is bound at residue C135. The tract at residues 285-307 (QLTETDKAAKESEKKQEDAEGEA) is disordered.

The protein belongs to the NifH/BchL/ChlL family. As to quaternary structure, homodimer. [4Fe-4S] cluster is required as a cofactor. Post-translationally, the reversible ADP-ribosylation of Arg-104 inactivates the nitrogenase reductase and regulates nitrogenase activity.

The catalysed reaction is N2 + 8 reduced [2Fe-2S]-[ferredoxin] + 16 ATP + 16 H2O = H2 + 8 oxidized [2Fe-2S]-[ferredoxin] + 2 NH4(+) + 16 ADP + 16 phosphate + 6 H(+). Functionally, the key enzymatic reactions in nitrogen fixation are catalyzed by the nitrogenase complex, which has 2 components: the iron protein and the molybdenum-iron protein. This is Nitrogenase iron protein 2 (nifH2) from Mastigocladus laminosus (Fischerella sp.).